A 276-amino-acid polypeptide reads, in one-letter code: 4-diphosphocytidyl-2-C-methyl-D-erythritol kinase (276 aa).

Lysine 13 is a catalytic residue. Proline 94–alanine 104 is a binding site for ATP. Aspartate 131 is an active-site residue.

Belongs to the GHMP kinase family. IspE subfamily.

It carries out the reaction 4-CDP-2-C-methyl-D-erythritol + ATP = 4-CDP-2-C-methyl-D-erythritol 2-phosphate + ADP + H(+). It participates in isoprenoid biosynthesis; isopentenyl diphosphate biosynthesis via DXP pathway; isopentenyl diphosphate from 1-deoxy-D-xylulose 5-phosphate: step 3/6. Catalyzes the phosphorylation of the position 2 hydroxy group of 4-diphosphocytidyl-2C-methyl-D-erythritol. The chain is 4-diphosphocytidyl-2-C-methyl-D-erythritol kinase from Jannaschia sp. (strain CCS1).